Consider the following 424-residue polypeptide: CinA-like protein (424 aa).

Belongs to the CinA family.

The polypeptide is CinA-like protein (Shewanella woodyi (strain ATCC 51908 / MS32)).